The chain runs to 470 residues: Protein C-ets-2 (470 aa).

The region spanning 85-170 is the PNT domain; the sequence is ATFSGFKKEQ…EHLEQMIKEN (86 aa). The residue at position 225 (Ser-225) is a Phosphoserine. Positions 270–291 are disordered; that stretch reads ASGKPRDHDSAETGGDSFESSE. Phosphoserine is present on residues Ser-296, Ser-299, and Ser-302. Residues 364–444 constitute a DNA-binding region (ETS); it reads IQLWQFLLEL…SGKRYVYRFV (81 aa).

This sequence belongs to the ETS family. Phosphorylation by CDK10 at Ser-225 may create a phosphodegron that targets ETS2 for proteasomal degradation.

It is found in the nucleus. In terms of biological role, transcription factor activating transcription. Binds specifically the GGA DNA motif in gene promoters and stimulates transcription of those genes. This Bos taurus (Bovine) protein is Protein C-ets-2 (ETS2).